A 92-amino-acid chain; its full sequence is Mediator-associated protein 3 (92 aa).

A DEK-C domain is found at 13-70 (KDLRRKIKKTVKKILESSNLYKITEIKAREEASLKLDLDLSQDPYKVIVKEEVENFLE).

In terms of assembly, associated with the Mediator complex.

The protein localises to the nucleus. This Arabidopsis thaliana (Mouse-ear cress) protein is Mediator-associated protein 3.